Consider the following 441-residue polypeptide: Dolichyl-diphosphooligosaccharide--protein glycosyltransferase 48 kDa subunit (441 aa).

A signal peptide spans 1–28; that stretch reads MKMVPRLAVRAWPLCGLLLAALGCVCAS. Topologically, residues 29–412 are lumenal; that stretch reads GPRTLVLLDN…YERFIPSAYP (384 aa). A helical membrane pass occupies residues 413 to 432; it reads YYASAFSMMAGLFLFSVVFL. Residues 433-441 are Cytoplasmic-facing; sequence HMKEKEKSD.

The protein belongs to the DDOST 48 kDa subunit family. In terms of assembly, component of the oligosaccharyltransferase (OST) complex. OST exists in two different complex forms which contain common core subunits RPN1, RPN2, OST48, OST4, DAD1 and TMEM258, either STT3A or STT3B as catalytic subunits, and form-specific accessory subunits. STT3A complex assembly occurs through the formation of 3 subcomplexes. Subcomplex 1 contains RPN1 and TMEM258, subcomplex 2 contains the STT3A-specific subunits STT3A, DC2/OSTC, and KCP2 as well as the core subunit OST4, and subcomplex 3 contains RPN2, DAD1, and OST48. The STT3A complex can form stable complexes with the Sec61 complex or with both the Sec61 and TRAP complexes. Interacts with SMIM22.

Its subcellular location is the endoplasmic reticulum membrane. It participates in protein modification; protein glycosylation. In terms of biological role, subunit of the oligosaccharyl transferase (OST) complex that catalyzes the initial transfer of a defined glycan (Glc(3)Man(9)GlcNAc(2) in eukaryotes) from the lipid carrier dolichol-pyrophosphate to an asparagine residue within an Asn-X-Ser/Thr consensus motif in nascent polypeptide chains, the first step in protein N-glycosylation. N-glycosylation occurs cotranslationally and the complex associates with the Sec61 complex at the channel-forming translocon complex that mediates protein translocation across the endoplasmic reticulum (ER). All subunits are required for a maximal enzyme activity. Required for the assembly of both SST3A- and SS3B-containing OST complexes. This is Dolichyl-diphosphooligosaccharide--protein glycosyltransferase 48 kDa subunit from Rattus norvegicus (Rat).